A 168-amino-acid chain; its full sequence is ATP synthase subunit b (168 aa).

Residues 13–33 (WTFLFQTLNLLVVMGLLYVFL) form a helical membrane-spanning segment.

Belongs to the ATPase B chain family. In terms of assembly, F-type ATPases have 2 components, F(1) - the catalytic core - and F(0) - the membrane proton channel. F(1) has five subunits: alpha(3), beta(3), gamma(1), delta(1), epsilon(1). F(0) has three main subunits: a(1), b(2) and c(10-14). The alpha and beta chains form an alternating ring which encloses part of the gamma chain. F(1) is attached to F(0) by a central stalk formed by the gamma and epsilon chains, while a peripheral stalk is formed by the delta and b chains.

Its subcellular location is the cell membrane. Functionally, f(1)F(0) ATP synthase produces ATP from ADP in the presence of a proton or sodium gradient. F-type ATPases consist of two structural domains, F(1) containing the extramembraneous catalytic core and F(0) containing the membrane proton channel, linked together by a central stalk and a peripheral stalk. During catalysis, ATP synthesis in the catalytic domain of F(1) is coupled via a rotary mechanism of the central stalk subunits to proton translocation. Its function is as follows. Component of the F(0) channel, it forms part of the peripheral stalk, linking F(1) to F(0). The sequence is that of ATP synthase subunit b from Moorella thermoacetica (strain ATCC 39073 / JCM 9320).